The primary structure comprises 138 residues: Sporulation-specific protein 13 (138 aa).

Residues 1–11 (MMSNSQISKLF) show a composition bias toward polar residues. Positions 1–31 (MMSNSQISKLFSSISNKENSNENALKESTNK) are disordered. The span at 12–23 (SSISNKENSNEN) shows a compositional bias: low complexity. Positions 16 to 104 (NKENSNENAL…KRELDYLRAK (89 aa)) form a coiled coil.

Interacts with spo2.

Its subcellular location is the cytoplasm. The protein resides in the cytoskeleton. It localises to the microtubule organizing center. The protein localises to the spindle pole body. Functionally, involved in sporulation. Plays a significant role in modification of the spindle pole body prior to spore formation and is required for initiating forespore membrane formation. The chain is Sporulation-specific protein 13 (spo13) from Schizosaccharomyces pombe (strain 972 / ATCC 24843) (Fission yeast).